The primary structure comprises 407 residues: MVSTLKRDEALFELIALEEKRQREGLELIASENFVSKQVREAVGSVLTNKYAEGYPGARYYGGCEVIDRVESLAIERAKALFGAAWANVQPHSGSQANMAVYMALMEPGDTLMGMDLAAGGHLTHGSRVNFSGKLYKVVSYGVRPDTELIDLEEVRRLALEHRPKVIVAGASAYPRFWDFKAFREIADEVGAYLVVDMAHFAGLVAAGLHPNPLPYAHVVTSTTHKTLRGPRGGLILSNDPELGKRIDKLIFPGIQGGPLEHVIAGKAVAFFEALQPEFKEYSRLVVENAKRLAEELARRGYRIVTGGTDNHLFLVDLRPKGLTGKEAEERLDAVGITVNKNAIPFDPKPPRVTSGIRIGTPAITTRGFTPEEMPLVAELIDRALLEGPSEALREEVRRLALAHPMP.

Residues Y51 and 94 to 95 (GS) each bind pyridoxal 5'-phosphate. (6S)-5,6,7,8-tetrahydrofolate contacts are provided by residues L117 and 121–123 (GHL). Residues S172, H200, and H225 each coordinate pyridoxal 5'-phosphate. Residue K226 is modified to N6-(pyridoxal phosphate)lysine. E242 contributes to the (6S)-5,6,7,8-tetrahydrofolate binding site. Residue G258 coordinates pyridoxal 5'-phosphate.

Belongs to the SHMT family. Homodimer. It depends on pyridoxal 5'-phosphate as a cofactor.

It localises to the cytoplasm. The enzyme catalyses (6R)-5,10-methylene-5,6,7,8-tetrahydrofolate + glycine + H2O = (6S)-5,6,7,8-tetrahydrofolate + L-serine. It functions in the pathway one-carbon metabolism; tetrahydrofolate interconversion. It participates in amino-acid biosynthesis; glycine biosynthesis; glycine from L-serine: step 1/1. In terms of biological role, catalyzes the reversible interconversion of serine and glycine with tetrahydrofolate (THF) serving as the one-carbon carrier. This reaction serves as the major source of one-carbon groups required for the biosynthesis of purines, thymidylate, methionine, and other important biomolecules. Also exhibits THF-independent aldolase activity toward beta-hydroxyamino acids, producing glycine and aldehydes, via a retro-aldol mechanism. This Thermus thermophilus (strain ATCC 27634 / DSM 579 / HB8) protein is Serine hydroxymethyltransferase.